We begin with the raw amino-acid sequence, 157 residues long: MAVAEFEITSSLSPSNIFKAFVIDFDTIAPKAEPETYKSIKTIEGDGGVGTIKSITYSDGVPFTSSKHKVDAIDSNNFSISYTIFEGDVLMGIIESGTHHLKFLPSADGGSVYKHSMVFKCKGDAKLTDENVSLMKEGLKKTFKAIETYVISHPEAC.

Belongs to the BetVI family.

The sequence is that of Root allergen protein from Taraxacum officinale (Common dandelion).